Here is a 124-residue protein sequence, read N- to C-terminus: Insulin-like growth factor 1 (124 aa).

Residues 1 to 19 (IHFFYLGLCLLTLTSSAAA) constitute a propeptide that is removed on maturation. The b stretch occupies residues 20-48 (GPETLCGAELVDALQFVCGDRGFYFSKPT). Intrachain disulfides connect cysteine 25–cysteine 67, cysteine 37–cysteine 80, and cysteine 66–cysteine 71. Residues 49–60 (GYGSSSRRLHHK) are c. An a region spans residues 61–81 (GIVDECCFQSCDLRRLEMYCA). A d region spans residues 82-89 (PIKPPKSA). Residues 86 to 124 (PKSARSVRAQRHTDMPKAQKEVHLKNTSRGNTGNRNYRM) are disordered. Positions 90–124 (RSVRAQRHTDMPKAQKEVHLKNTSRGNTGNRNYRM) are cleaved as a propeptide — e peptide. The span at 96 to 109 (RHTDMPKAQKEVHL) shows a compositional bias: basic and acidic residues. The segment covering 110–124 (KNTSRGNTGNRNYRM) has biased composition (polar residues).

This sequence belongs to the insulin family.

The protein resides in the secreted. Functionally, the insulin-like growth factors, isolated from plasma, are structurally and functionally related to insulin but have a much higher growth-promoting activity. Acts as a ligand for IGF1R. Binds to the alpha subunit of IGF1R, leading to the activation of the intrinsic tyrosine kinase activity which autophosphorylates tyrosine residues in the beta subunit thus initiatiating a cascade of down-stream signaling events leading to activation of the PI3K-AKT/PKB and the Ras-MAPK pathways. Binds to integrins. Its binding to integrins and subsequent ternary complex formation with integrins and IGFR1 are essential for IGF1 signaling. The chain is Insulin-like growth factor 1 from Coturnix japonica (Japanese quail).